The sequence spans 284 residues: tRNA uridine(34) hydroxylase (284 aa).

The region spanning 132–226 (AGRPVVMLDT…YFEEVGGAHY (95 aa)) is the Rhodanese domain. Cys-186 acts as the Cysteine persulfide intermediate in catalysis.

It belongs to the TrhO family.

It carries out the reaction uridine(34) in tRNA + AH2 + O2 = 5-hydroxyuridine(34) in tRNA + A + H2O. Functionally, catalyzes oxygen-dependent 5-hydroxyuridine (ho5U) modification at position 34 in tRNAs. The polypeptide is tRNA uridine(34) hydroxylase (Burkholderia orbicola (strain MC0-3)).